A 35-amino-acid chain; its full sequence is Conotoxin Cal6.1c (35 aa).

Residues glycine 1 to alanine 35 constitute a propeptide that is removed on maturation. Disulfide bonds link cysteine 9/cysteine 25, cysteine 16/cysteine 29, and cysteine 24/cysteine 34.

The protein belongs to the conotoxin O1 superfamily. Expressed by the venom duct.

The protein resides in the secreted. Its function is as follows. Probable neurotoxin with unknown target. Possibly targets ion channels. This chain is Conotoxin Cal6.1c, found in Californiconus californicus (California cone).